Here is a 593-residue protein sequence, read N- to C-terminus: Early nodule-specific protein 2 (593 aa).

Positions 71–110 (EKPPIYEPPPTEEPPPVYKPPIIHPPPNYKPPAHTPPIYH) are enriched in pro residues. Residues 71 to 593 (EKPPIYEPPP…GHYPPYKKNQ (523 aa)) are disordered. Basic and acidic residues-rich tracts occupy residues 123 to 138 (PYEK…EYQP) and 166 to 195 (PPYE…EKPP). Over residues 196–210 (PEYTPPYEKPPPEYQ) the composition is skewed to pro residues. 2 stretches are compositionally biased toward basic and acidic residues: residues 227–265 (PPHE…EKPP) and 275–292 (PPHE…EKPP). Residues 294–306 (VHPPPEYQPPYLK) are compositionally biased toward pro residues. Composition is skewed to basic and acidic residues over residues 339-350 (PPHEKPPHEHPP), 360-372 (PPPE…ENPP), 382-394 (PPHE…EHPP), and 404-421 (PPPE…EHPP). The segment covering 422–435 (PEYQPPQENPPPEY) has biased composition (pro residues). Residues 506–522 (PRHEKPMPKYQPPHEKL) show a composition bias toward basic and acidic residues. Residues 532 to 558 (KTPPPQAYHPPPPIYHHPPFHPPPHVK) are compositionally biased toward pro residues.

Belongs to the nodulin 75 family.

Involved in early stages of root nodule development. This Medicago truncatula (Barrel medic) protein is Early nodule-specific protein 2.